A 169-amino-acid chain; its full sequence is ATP synthase subunit b (169 aa).

The chain crosses the membrane as a helical span at residues 11 to 31 (KLPLGNMLFIIISFLVLMVIL).

This sequence belongs to the ATPase B chain family. In terms of assembly, F-type ATPases have 2 components, F(1) - the catalytic core - and F(0) - the membrane proton channel. F(1) has five subunits: alpha(3), beta(3), gamma(1), delta(1), epsilon(1). F(0) has three main subunits: a(1), b(2) and c(10-14). The alpha and beta chains form an alternating ring which encloses part of the gamma chain. F(1) is attached to F(0) by a central stalk formed by the gamma and epsilon chains, while a peripheral stalk is formed by the delta and b chains.

The protein localises to the cell membrane. F(1)F(0) ATP synthase produces ATP from ADP in the presence of a proton or sodium gradient. F-type ATPases consist of two structural domains, F(1) containing the extramembraneous catalytic core and F(0) containing the membrane proton channel, linked together by a central stalk and a peripheral stalk. During catalysis, ATP synthesis in the catalytic domain of F(1) is coupled via a rotary mechanism of the central stalk subunits to proton translocation. In terms of biological role, component of the F(0) channel, it forms part of the peripheral stalk, linking F(1) to F(0). The sequence is that of ATP synthase subunit b from Leuconostoc citreum (strain KM20).